A 506-amino-acid polypeptide reads, in one-letter code: Sucrose transport protein SUT3 (506 aa).

Topologically, residues 1-20 (MAVDMELDGGGDGKGKAPPQ) are cytoplasmic. Residues 21–41 (ISLSGLFLACMVAGGVQYGWA) form a helical membrane-spanning segment. Over 42–54 (LQLSLLTPYVQTL) the chain is Extracellular. The chain crosses the membrane as a helical span at residues 55-75 (GIPHALTSVMWLCGPIAGLIV). At 76–94 (QPCVGLYSDKCTSSLGRRR) the chain is on the cytoplasmic side. The chain crosses the membrane as a helical span at residues 95-115 (PFILTGCIIICISVIVIGFSS). Over 116–135 (DIGYALGDTTEDCKVYRGPR) the chain is Extracellular. Residues 136 to 156 (YHAAAAFILGFWLLDFSNNTV) form a helical membrane-spanning segment. Over 157–171 (QGPARALMADLSGRH) the chain is Cytoplasmic. A helical membrane pass occupies residues 172-192 (GPSAANAIFCSWMALGNILGY). Topologically, residues 193 to 220 (SSGSTNDWHKWFPFLMTRACCEACANLK) are extracellular. Residues 221 to 241 (AAFLVAVVFLGLSTAVTMVFA) traverse the membrane as a helical segment. Residues 242–275 (REVALDPVAAAKRNEGEASGLLAVFKGMKNLPVG) lie on the Cytoplasmic side of the membrane. The helical transmembrane segment at 276 to 296 (MPSVLIVTGLTWLSWFPFILF) threads the bilayer. Residues 297-327 (DTDWMGREIYHGRPDGSPAEVTAFQEGVRQG) lie on the Extracellular side of the membrane. Residues 328 to 348 (AFGLLLNSIVLGISSFLIEPM) traverse the membrane as a helical segment. Topologically, residues 349-355 (CRRLGAR) are cytoplasmic. A helical transmembrane segment spans residues 356-376 (AVWVMSSAVVCVAMAAVSVLS). At 377 to 404 (AWSLGDFGGSVQDAARAPAEEGGVRASA) the chain is on the extracellular side. The chain crosses the membrane as a helical span at residues 405–425 (LALFVFLGLPFAVLCSVPFAV). Over 426-441 (TAQLAASRGGGQGLCT) the chain is Cytoplasmic. The chain crosses the membrane as a helical span at residues 442 to 462 (GVLNISIVVPQMAIALGAGPW). The Extracellular portion of the chain corresponds to 463-470 (DELFGEGN). A helical membrane pass occupies residues 471-491 (IPAFAMASVFAAAAAAAGVVL). At 492–506 (LPKVSVRSVSMAGGH) the chain is on the cytoplasmic side.

The protein belongs to the glycoside-pentoside-hexuronide (GPH) cation symporter transporter (TC 2.A.2.4) family. In terms of assembly, homodimer. Widely expressed. Highest expression in sink leaves and lowest in germinating seeds.

The protein resides in the cell membrane. It participates in glycan biosynthesis; sucrose metabolism. Its function is as follows. Responsible for the transport of sucrose into the cell, with the concomitant uptake of protons (symport system). May also transport other glucosides. The sequence is that of Sucrose transport protein SUT3 (SUT3) from Oryza sativa subsp. japonica (Rice).